Consider the following 316-residue polypeptide: PAK4-inhibitor inka2 (316 aa).

Disordered regions lie at residues 43-74 and 108-130; these read RSSP…SHRT and YSEV…ESET. Over residues 65–74 the composition is skewed to basic and acidic residues; the sequence is RRDNRISHRT. The segment covering 119–129 has biased composition (acidic residues); it reads EEDDIVEEESE. Positions 182-219 are inka box; it reads DSQDWTGCLLSQSRSRQPLVLGDNSFADLVKQWMDLPE.

It belongs to the INKA family.

Its subcellular location is the nucleus. Functionally, inhibitor of the serine/threonine-protein kinase pak4/pak5. Acts by binding pak4/pak5 in a substrate-like manner, inhibiting the protein kinase activity. This is PAK4-inhibitor inka2 from Xenopus laevis (African clawed frog).